The primary structure comprises 163 residues: Late embryogenesis abundant protein Dc3 (163 aa).

Disordered stretches follow at residues 1–117 and 139–163; these read MASH…GGLM and FGMA…ARTE. 3 stretches are compositionally biased toward basic and acidic residues: residues 28 to 56, 67 to 84, and 91 to 113; these read TMKD…ESKD, GAVK…KEKT, and TKEK…KEKT. 6 repeat units span residues 32–42, 43–53, 65–75, 76–86, 87–97, and 103–115. Residues 32–115 form a 6 X 11 AA approximate repeats region; that stretch reads KAQAAKDKAS…AVAGKEKTGG (84 aa). The segment covering 152–163 has biased composition (low complexity); sequence TTRVTRSSARTE.

Belongs to the LEA type 4 family.

The protein is Late embryogenesis abundant protein Dc3 of Daucus carota (Wild carrot).